Here is a 1178-residue protein sequence, read N- to C-terminus: Phosphate system positive regulatory protein PHO81 (1178 aa).

An SPX domain is found at 1-169 (MKFGKYLEAR…QSHDKDFYLA (169 aa)). Positions 210–250 (QSSTFTNDDDDDNNTSNNNKHNNNNNNNNNNNNNNNNNNIL) are disordered. Over residues 223-250 (NTSNNNKHNNNNNNNNNNNNNNNNNNIL) the composition is skewed to low complexity. 6 ANK repeats span residues 423–452 (HSRVPLHYAAELGKLEFVHSLLITNLLEDV), 458–487 (DSKTPLVLAITNNHIDVVRDLLTIGGANAS), 506–535 (VQFDPLNVACKFNNHDAAKLLLEIRSKQNA), 556–586 (TGLCTLHIVAKIGGDPQLIQLLIRYGADPNE), 591–620 (NKWTPIFYAVRSGHSEVITELLKHNARLDI), and 624–653 (NGHSPLFYALWESHVDVLNALLQRPLNLPS). The GP-PDE domain maps to 871–1178 (IINYEPYWKS…ELLFENNIDM (308 aa)). Phosphoserine is present on serine 956.

As to quaternary structure, associates specifically with the PHO80-PHO85 and PCL7-PHO85 cyclin-CDK complexes, and much of this interaction is mediated through the PHO80 and PCL7 cyclin subunits. Interacts with the transcription factor PHO4. Phosphorylated by the cyclin-CDK PHO80-PHO85. Phosphorylation mediates the formation of a stable interaction with the cyclin-CDK and is required for function as an active inhibitor of the complex under phosphate starvation conditions.

Its subcellular location is the cytoplasm. The protein resides in the nucleus. Inhibits the kinase activity of the cyclin-CDKs PHO80-PHO85 and PCL7-PHO85 under low-phosphate conditions. In Saccharomyces cerevisiae (strain ATCC 204508 / S288c) (Baker's yeast), this protein is Phosphate system positive regulatory protein PHO81 (PHO81).